Consider the following 695-residue polypeptide: Hypersensitivity response secretion protein HrpI (695 aa).

7 helical membrane passes run 21-38 (LVGA…ITPL), 45-61 (VLIA…IMLA), 68-92 (LAFS…VSTT), 111-135 (FVVG…FLVI), 203-223 (AIAS…IGVL), 244-262 (GLIA…GMII), and 311-327 (VFIT…LLQL).

Belongs to the FHIPEP (flagella/HR/invasion proteins export pore) family.

It is found in the cell inner membrane. Functionally, involved in the secretion of harpin-pss; a proteinaceous elicitor of the hypersensitivity response in plants. This is Hypersensitivity response secretion protein HrpI (hrpI) from Pseudomonas syringae pv. syringae.